Reading from the N-terminus, the 521-residue chain is Glucose-6-phosphate isomerase (521 aa).

The active-site Proton donor is Glu327. Residues His358 and Lys486 contribute to the active site.

Belongs to the GPI family.

Its subcellular location is the cytoplasm. The catalysed reaction is alpha-D-glucose 6-phosphate = beta-D-fructose 6-phosphate. It functions in the pathway carbohydrate biosynthesis; gluconeogenesis. It participates in carbohydrate degradation; glycolysis; D-glyceraldehyde 3-phosphate and glycerone phosphate from D-glucose: step 2/4. Functionally, catalyzes the reversible isomerization of glucose-6-phosphate to fructose-6-phosphate. This Bordetella petrii (strain ATCC BAA-461 / DSM 12804 / CCUG 43448) protein is Glucose-6-phosphate isomerase.